The primary structure comprises 314 residues: Methionyl-tRNA formyltransferase (314 aa).

108 to 111 contacts (6S)-5,6,7,8-tetrahydrofolate; that stretch reads SLLP.

It belongs to the Fmt family.

It carries out the reaction L-methionyl-tRNA(fMet) + (6R)-10-formyltetrahydrofolate = N-formyl-L-methionyl-tRNA(fMet) + (6S)-5,6,7,8-tetrahydrofolate + H(+). Attaches a formyl group to the free amino group of methionyl-tRNA(fMet). The formyl group appears to play a dual role in the initiator identity of N-formylmethionyl-tRNA by promoting its recognition by IF2 and preventing the misappropriation of this tRNA by the elongation apparatus. The sequence is that of Methionyl-tRNA formyltransferase from Akkermansia muciniphila (strain ATCC BAA-835 / DSM 22959 / JCM 33894 / BCRC 81048 / CCUG 64013 / CIP 107961 / Muc).